The sequence spans 450 residues: Transcription factor AP-2 gamma (450 aa).

Lys-10 is covalently cross-linked (Glycyl lysine isopeptide (Lys-Gly) (interchain with G-Cter in SUMO)). 2 disordered regions span residues 13–63 and 90–126; these read EDCE…FPPP and LHQP…GLLP. A PPxY motif motif is present at residues 59–64; it reads YFPPPY. Over residues 95–110 the composition is skewed to polar residues; the sequence is PTGSQQQAWPGRQSQE. A Phosphoserine; by PKA modification is found at Ser-252. Residues 293-424 are H-S-H (helix-span-helix), dimerization; it reads RRKAAHVTLL…YIKEALIVID (132 aa). The tract at residues 431–450 is disordered; that stretch reads GDQSPADSNKTLEKMEKHRK. Ser-434 is subject to Phosphoserine. Residues 440–450 show a composition bias toward basic and acidic residues; it reads KTLEKMEKHRK.

This sequence belongs to the AP-2 family. Binds DNA as a dimer. Can form homodimers or heterodimers with other AP-2 family members. Interacts with WWOX. Interacts with UBE2I. Interacts with KCTD1; this interaction represses transcription activation. Interacts with CITED2 (via C-terminus); the interaction stimulates TFAP2B-transcriptional activity. Interacts with CITED4. Interacts with MTA1. In terms of processing, sumoylated on Lys-10; which inhibits transcriptional activity.

The protein resides in the nucleus. In terms of biological role, sequence-specific DNA-binding transcription factor that interacts with cellular enhancer elements to regulate transcription of selected genes, and which plays a key role in early embryonic development. AP-2 factors bind to the consensus sequence 5'-GCCNNNGGC-3' and activate genes involved in a large spectrum of important biological functions. TFAP2C plays a key role in early embryonic development by regulating both inner cell mass (ICM) and trophectoderm differentiation. At the 8-cell stage, during morula development, controls expression of cell-polarity genes. Upon trophoblast commitment, binds to late trophectoderm genes in blastocysts together with CDX2, and later to extra-embryonic ectoderm genes together with SOX2. Binds to both closed and open chromatin with other transcription factors. Involved in the MTA1-mediated epigenetic regulation of ESR1 expression in breast cancer. This is Transcription factor AP-2 gamma (TFAP2C) from Homo sapiens (Human).